Consider the following 97-residue polypeptide: Large ribosomal subunit protein uL23 (97 aa).

Belongs to the universal ribosomal protein uL23 family. Part of the 50S ribosomal subunit. Contacts protein L29, and trigger factor when it is bound to the ribosome.

One of the early assembly proteins it binds 23S rRNA. One of the proteins that surrounds the polypeptide exit tunnel on the outside of the ribosome. Forms the main docking site for trigger factor binding to the ribosome. This Sinorhizobium fredii (strain NBRC 101917 / NGR234) protein is Large ribosomal subunit protein uL23.